The following is a 980-amino-acid chain: Chitin binding domain containing chtb-2 (980 aa).

The signal sequence occupies residues 1–20; sequence MRTMHCFLFILLFCLGQVFT. 2 N-linked (GlcNAc...) asparagine glycosylation sites follow: asparagine 187 and asparagine 190. Disordered stretches follow at residues 310–354, 431–451, and 486–512; these read ERQQ…AELD, QEEE…QIRQ, and EILR…QQEA. N-linked (GlcNAc...) asparagine glycans are attached at residues asparagine 941 and asparagine 975.

The chain is Chitin binding domain containing chtb-2 from Caenorhabditis elegans.